The sequence spans 366 residues: Cobalt-precorrin-5B C(1)-methyltransferase (366 aa).

It belongs to the CbiD family.

The catalysed reaction is Co-precorrin-5B + S-adenosyl-L-methionine = Co-precorrin-6A + S-adenosyl-L-homocysteine. It functions in the pathway cofactor biosynthesis; adenosylcobalamin biosynthesis; cob(II)yrinate a,c-diamide from sirohydrochlorin (anaerobic route): step 6/10. Catalyzes the methylation of C-1 in cobalt-precorrin-5B to form cobalt-precorrin-6A. The sequence is that of Cobalt-precorrin-5B C(1)-methyltransferase from Pseudomonas aeruginosa (strain UCBPP-PA14).